A 159-amino-acid polypeptide reads, in one-letter code: Transcription elongation factor GreA (159 aa).

Positions 2–77 form a coiled coil; the sequence is EENKEFLLTQ…LENMVRKAVI (76 aa).

This sequence belongs to the GreA/GreB family.

Functionally, necessary for efficient RNA polymerase transcription elongation past template-encoded arresting sites. The arresting sites in DNA have the property of trapping a certain fraction of elongating RNA polymerases that pass through, resulting in locked ternary complexes. Cleavage of the nascent transcript by cleavage factors such as GreA or GreB allows the resumption of elongation from the new 3'terminus. GreA releases sequences of 2 to 3 nucleotides. The polypeptide is Transcription elongation factor GreA (Clostridioides difficile (strain 630) (Peptoclostridium difficile)).